Reading from the N-terminus, the 182-residue chain is UPF0690 protein C1orf52 homolog (182 aa).

Residues 1-61 are disordered; that stretch reads MAAEEKDPLS…AEKRLPGPDE (61 aa). Residues 23 to 32 show a composition bias toward acidic residues; that stretch reads SDEEDNSEPE. Residues 51–61 are compositionally biased toward basic and acidic residues; it reads KAEKRLPGPDE. At threonine 67 the chain carries Phosphothreonine. At tyrosine 132 the chain carries Phosphotyrosine. Residues 132–182 are disordered; that stretch reads YEDNGDDAPQNAKKARLLPEGEETVESDDEKDEHTSKKRKIELGEPTKKKK. Acidic residues predominate over residues 151–162; that stretch reads EGEETVESDDEK. Serine 158 bears the Phosphoserine mark. The span at 172-182 shows a compositional bias: basic and acidic residues; it reads IELGEPTKKKK.

It belongs to the UPF0690 family.

The polypeptide is UPF0690 protein C1orf52 homolog (Bos taurus (Bovine)).